The chain runs to 424 residues: GTPase Obg (424 aa).

The region spanning 1 to 158 is the Obg domain; sequence MFVDRAEVFV…RYISLELKIL (158 aa). Positions 21–42 are disordered; it reads SFRREKYVPRGGPDGGDGGKGG. Positions 32–42 are enriched in gly residues; sequence GPDGGDGGKGG. Positions 159-331 constitute an OBG-type G domain; the sequence is ADVGLLGFPN…LMKEAAAMLT (173 aa). Residues 165–172, 190–194, 212–215, 282–285, and 312–314 contribute to the GTP site; these read GFPNVGKS, FTTLS, DIPG, NKAD, and SAA. The Mg(2+) site is built by Ser-172 and Thr-192. Residues 345-424 enclose the OCT domain; sequence KFIPEEKRFT…LNDFEFDYIL (80 aa).

This sequence belongs to the TRAFAC class OBG-HflX-like GTPase superfamily. OBG GTPase family. As to quaternary structure, monomer. It depends on Mg(2+) as a cofactor.

Its subcellular location is the cytoplasm. In terms of biological role, an essential GTPase which binds GTP, GDP and possibly (p)ppGpp with moderate affinity, with high nucleotide exchange rates and a fairly low GTP hydrolysis rate. Plays a role in control of the cell cycle, stress response, ribosome biogenesis and in those bacteria that undergo differentiation, in morphogenesis control. The polypeptide is GTPase Obg (Clostridium kluyveri (strain NBRC 12016)).